The sequence spans 174 residues: ATP synthase subunit delta (174 aa).

Belongs to the ATPase delta chain family. F-type ATPases have 2 components, F(1) - the catalytic core - and F(0) - the membrane proton channel. F(1) has five subunits: alpha(3), beta(3), gamma(1), delta(1), epsilon(1). F(0) has three main subunits: a(1), b(2) and c(10-14). The alpha and beta chains form an alternating ring which encloses part of the gamma chain. F(1) is attached to F(0) by a central stalk formed by the gamma and epsilon chains, while a peripheral stalk is formed by the delta and b chains.

Its subcellular location is the cell inner membrane. Its function is as follows. F(1)F(0) ATP synthase produces ATP from ADP in the presence of a proton or sodium gradient. F-type ATPases consist of two structural domains, F(1) containing the extramembraneous catalytic core and F(0) containing the membrane proton channel, linked together by a central stalk and a peripheral stalk. During catalysis, ATP synthesis in the catalytic domain of F(1) is coupled via a rotary mechanism of the central stalk subunits to proton translocation. This protein is part of the stalk that links CF(0) to CF(1). It either transmits conformational changes from CF(0) to CF(1) or is implicated in proton conduction. The chain is ATP synthase subunit delta from Francisella tularensis subsp. tularensis (strain FSC 198).